A 157-amino-acid chain; its full sequence is Peptide methionine sulfoxide reductase MsrA (157 aa).

Cysteine 13 is a catalytic residue.

The protein belongs to the MsrA Met sulfoxide reductase family.

It catalyses the reaction L-methionyl-[protein] + [thioredoxin]-disulfide + H2O = L-methionyl-(S)-S-oxide-[protein] + [thioredoxin]-dithiol. The enzyme catalyses [thioredoxin]-disulfide + L-methionine + H2O = L-methionine (S)-S-oxide + [thioredoxin]-dithiol. In terms of biological role, has an important function as a repair enzyme for proteins that have been inactivated by oxidation. Catalyzes the reversible oxidation-reduction of methionine sulfoxide in proteins to methionine. This is Peptide methionine sulfoxide reductase MsrA from Methanococcus maripaludis (strain C7 / ATCC BAA-1331).